The chain runs to 311 residues: UPF0324 membrane protein VV1_3166 (311 aa).

Helical transmembrane passes span 8 to 28 (FIFALLLCLSPWVSSPTALVL), 51 to 71 (LLSYSIIGLGFGIQFQQAIAV), 74 to 94 (DGIGLIVVTIAGTLLLGFLVA), 106 to 126 (LISAGTAICGGSAIAAVAPAI), 133 to 153 (IALALATVFVLNSLALFIFPV), 165 to 185 (FGTWAAIAIHDTSSVVGAASA), 197 to 217 (LKLARALWIIPVALLSAILFA), 228 to 248 (LVLPYFIFWYCAAIAFSDLFP), 256 to 276 (GIFSVAKQALVVCLFLIGCSI), and 289 to 309 (LIFGLSLWVVISTTSLSWLLL).

Belongs to the UPF0324 family.

The protein localises to the cell membrane. This chain is UPF0324 membrane protein VV1_3166, found in Vibrio vulnificus (strain CMCP6).